The primary structure comprises 633 residues: Leucine-rich repeat and IQ domain-containing protein 3 (633 aa).

LRR repeat units lie at residues 51–72, 73–94, and 98–119; these read SLRV…QSCK, KLIK…NFWS, and NLKL…CVLS. The region spanning 132–179 is the LRRCT domain; sequence CPVSLKKGYRHVLVNSIWPLKALDHHVISDEEIIQNWRLPERFKTFSP. Residues 215-244 form the IQ domain; the sequence is HNSPVLIIQRWIRGFIVRKHLSPYFKHKKH. Residues 324–343 are disordered; that stretch reads SKQPRHHIHKGQKAMKAESE. Basic residues predominate over residues 325-336; sequence KQPRHHIHKGQK. Residues 556–617 adopt a coiled-coil conformation; that stretch reads IEKWEEQKYK…AKVEYIKTFY (62 aa).

The protein is Leucine-rich repeat and IQ domain-containing protein 3 (Lrriq3) of Mus musculus (Mouse).